A 67-amino-acid chain; its full sequence is MAVPKRKMSRANTRARRAQWKATAPNLVKTIENGQVTYSLPHQAKVVTDSAGTALFLEYKGRKVADA.

Positions M1–Q19 are enriched in basic residues. The segment at M1–W20 is disordered.

This sequence belongs to the bacterial ribosomal protein bL32 family.

In Paenarthrobacter aurescens (strain TC1), this protein is Large ribosomal subunit protein bL32.